Reading from the N-terminus, the 253-residue chain is Probable transcriptional regulatory protein SynRCC307_1833 (253 aa).

The protein belongs to the TACO1 family.

The protein resides in the cytoplasm. In Synechococcus sp. (strain RCC307), this protein is Probable transcriptional regulatory protein SynRCC307_1833.